The chain runs to 156 residues: Small ribosomal subunit protein uS7 (156 aa).

It belongs to the universal ribosomal protein uS7 family. As to quaternary structure, part of the 30S ribosomal subunit. Contacts proteins S9 and S11.

Its function is as follows. One of the primary rRNA binding proteins, it binds directly to 16S rRNA where it nucleates assembly of the head domain of the 30S subunit. Is located at the subunit interface close to the decoding center, probably blocks exit of the E-site tRNA. This chain is Small ribosomal subunit protein uS7, found in Cupriavidus necator (strain ATCC 17699 / DSM 428 / KCTC 22496 / NCIMB 10442 / H16 / Stanier 337) (Ralstonia eutropha).